Reading from the N-terminus, the 252-residue chain is ATP synthase subunit a (252 aa).

6 helical membrane passes run 29–49 (FTNV…FLFI), 87–107 (FFPL…IGLF), 117–137 (IMIT…CGFY), 146–166 (LFVP…IEVI), 196–216 (FIVS…LPLI), and 219–239 (VAIT…FTVL).

This sequence belongs to the ATPase A chain family. F-type ATPases have 2 components, CF(1) - the catalytic core - and CF(0) - the membrane proton channel. CF(1) has five subunits: alpha(3), beta(3), gamma(1), delta(1), epsilon(1). CF(0) has three main subunits: a(1), b(2) and c(9-12). The alpha and beta chains form an alternating ring which encloses part of the gamma chain. CF(1) is attached to CF(0) by a central stalk formed by the gamma and epsilon chains, while a peripheral stalk is formed by the delta and b chains.

It localises to the cell inner membrane. Its function is as follows. Key component of the proton channel; it plays a direct role in the translocation of protons across the membrane. The chain is ATP synthase subunit a from Bartonella bacilliformis (strain ATCC 35685 / KC583 / Herrer 020/F12,63).